Consider the following 111-residue polypeptide: ATP-dependent Clp protease adapter protein ClpS (111 aa).

Belongs to the ClpS family. In terms of assembly, binds to the N-terminal domain of the chaperone ClpA.

Functionally, involved in the modulation of the specificity of the ClpAP-mediated ATP-dependent protein degradation. The protein is ATP-dependent Clp protease adapter protein ClpS of Legionella pneumophila (strain Paris).